A 359-amino-acid chain; its full sequence is Probable ribonucleotide transport ATP-binding protein mkl (359 aa).

The 237-residue stretch at 28–264 (IEVNGLTKSF…DEPVVRQFLN (237 aa)) folds into the ABC transporter domain. 60–67 (GPSGTGKS) contacts ATP.

Belongs to the ABC transporter superfamily.

Its function is as follows. Not known, could be involved in the transport of ribonucleotides. The protein is Probable ribonucleotide transport ATP-binding protein mkl (mkl) of Mycobacterium bovis (strain ATCC BAA-935 / AF2122/97).